The primary structure comprises 229 residues: Sperm-associated microtubule inner protein 5 (229 aa).

A disordered region spans residues 181 to 201 (PEFSGPGQTPPSEDPQAPRPC).

In terms of assembly, microtubule inner protein component of sperm flagellar doublet microtubules. In terms of tissue distribution, expressed in testis (at protein level).

It localises to the cytoplasm. The protein localises to the cytoskeleton. Its subcellular location is the flagellum axoneme. The protein resides in the nucleus. Functionally, microtubule inner protein (MIP) part of the dynein-decorated doublet microtubules (DMTs) in flagellum axoneme. May serve to reinforce and thus stabilize the microtubule structure in the sperm flagella. This is Sperm-associated microtubule inner protein 5 (Spmip5) from Mus musculus (Mouse).